Consider the following 847-residue polypeptide: B-cell receptor CD22 (847 aa).

The signal sequence occupies residues 1–19 (MHLLGPWLLLLVLEYLAFS). An Ig-like V-type domain is found at 20 to 138 (DSSKWAFEHP…MERIHLNVSE (119 aa)). At 20-687 (DSSKWAFEHP…YYSPETIGRR (668 aa)) the chain is on the extracellular side. N-linked (GlcNAc...) asparagine glycosylation is found at asparagine 67, asparagine 101, and asparagine 112. Arginine 120 lines the N-acetylneuraminate pocket. N-linked (GlcNAc...) asparagine glycans are attached at residues asparagine 135, asparagine 164, and asparagine 231. Ig-like C2-type domains follow at residues 143–235 (PHIQ…DTVQ), 242–326 (PKLE…VFLQ), 331–416 (PEPS…LDVQ), 419–500 (PKKV…VALN), 505–582 (PRDV…QTAS), and 593–676 (PRRL…STLT). Cysteines 161 and 219 form a disulfide. Disulfide bonds link cysteine 265–cysteine 309 and cysteine 353–cysteine 396. Asparagine 363, asparagine 428, asparagine 445, asparagine 448, and asparagine 479 each carry an N-linked (GlcNAc...) asparagine glycan. Disulfide bonds link cysteine 442/cysteine 484 and cysteine 529/cysteine 571. N-linked (GlcNAc...) asparagine glycosylation is found at asparagine 574 and asparagine 634. Cysteine 616 and cysteine 659 are joined by a disulfide. The helical transmembrane segment at 688–708 (VAVGFGSCLAILILAICGLKL) threads the bilayer. Residues 709-847 (QRRWKRTQSQ…ENVDYVILKH (139 aa)) lie on the Cytoplasmic side of the membrane. Phosphoserine occurs at positions 725, 726, and 729. 2 consecutive short sequence motifs (ITIM motif) follow at residues 760 to 765 (ISYTTL) and 794 to 799 (VTYSVL). Tyrosine 762 is subject to Phosphotyrosine. 3 positions are modified to phosphotyrosine: tyrosine 807, tyrosine 822, and tyrosine 842. 2 consecutive short sequence motifs (ITIM motif) follow at residues 820-825 (IHYSEL) and 840-845 (VDYVIL).

It belongs to the immunoglobulin superfamily. SIGLEC (sialic acid binding Ig-like lectin) family. Predominantly monomer of isoform CD22-beta. Also found as heterodimer of isoform CD22-beta and a shorter isoform. Interacts with PTPN6/SHP-1, LYN, SYK, PIK3R1/PIK3R2 and PLCG1 upon phosphorylation. Interacts with GRB2, INPP5D and SHC1 upon phosphorylation. May form a complex with INPP5D/SHIP, GRB2 and SHC1. Post-translationally, phosphorylation of Tyr-762, Tyr-807 and Tyr-822 are involved in binding to SYK, GRB2 and SYK, respectively. Phosphorylation of Tyr-842 is involved in binding to SYK, PLCG2 and PIK3R1/PIK3R2. Phosphorylated on tyrosine residues by LYN.

It localises to the cell membrane. Functionally, most highly expressed siglec (sialic acid-binding immunoglobulin-like lectin) on B-cells that plays a role in various aspects of B-cell biology including differentiation, antigen presentation, and trafficking to bone marrow. Binds to alpha 2,6-linked sialic acid residues of surface molecules such as CD22 itself, CD45 and IgM in a cis configuration. Can also bind to ligands on other cells as an adhesion molecule in a trans configuration. Acts as an inhibitory coreceptor on the surface of B-cells and inhibits B-cell receptor induced signaling, characterized by inhibition of the calcium mobilization and cellular activation. Mechanistically, the immunoreceptor tyrosine-based inhibitory motif domain is phosphorylated by the Src kinase LYN, which in turn leads to the recruitment of the protein tyrosine phosphatase 1/PTPN6, leading to the negative regulation of BCR signaling. If this negative signaling from is of sufficient strength, apoptosis of the B-cell can be induced. The protein is B-cell receptor CD22 of Pan troglodytes (Chimpanzee).